The chain runs to 362 residues: 3-isopropylmalate dehydrogenase (362 aa).

77 to 88 is an NAD(+) binding site; that stretch reads GPKWGTGSVRPE. The substrate site is built by arginine 95, arginine 105, arginine 134, and aspartate 223. 3 residues coordinate Mg(2+): aspartate 223, aspartate 248, and aspartate 252. Residue 287–298 participates in NAD(+) binding; the sequence is GSAPDLPKGKVN.

Belongs to the isocitrate and isopropylmalate dehydrogenases family. As to quaternary structure, homodimer. Mg(2+) serves as cofactor. Mn(2+) is required as a cofactor.

The protein localises to the cytoplasm. The enzyme catalyses (2R,3S)-3-isopropylmalate + NAD(+) = 4-methyl-2-oxopentanoate + CO2 + NADH. It functions in the pathway amino-acid biosynthesis; L-leucine biosynthesis; L-leucine from 3-methyl-2-oxobutanoate: step 3/4. Catalyzes the oxidation of 3-carboxy-2-hydroxy-4-methylpentanoate (3-isopropylmalate) to 3-carboxy-4-methyl-2-oxopentanoate. The product decarboxylates to 4-methyl-2 oxopentanoate. This is 3-isopropylmalate dehydrogenase (LEU2) from Zygosaccharomyces rouxii (strain ATCC 2623 / CBS 732 / NBRC 1130 / NCYC 568 / NRRL Y-229).